The primary structure comprises 126 residues: NADPH-dependent 7-cyano-7-deazaguanine reductase (126 aa).

Residue Cys-40 is the Thioimide intermediate of the active site. Asp-47 acts as the Proton donor in catalysis. Substrate is bound by residues 62–64 (IEL) and 81–82 (HE).

This sequence belongs to the GTP cyclohydrolase I family. QueF type 1 subfamily.

It localises to the cytoplasm. The enzyme catalyses 7-aminomethyl-7-carbaguanine + 2 NADP(+) = 7-cyano-7-deazaguanine + 2 NADPH + 3 H(+). It participates in tRNA modification; tRNA-queuosine biosynthesis. Its function is as follows. Catalyzes the NADPH-dependent reduction of 7-cyano-7-deazaguanine (preQ0) to 7-aminomethyl-7-deazaguanine (preQ1). The polypeptide is NADPH-dependent 7-cyano-7-deazaguanine reductase (Campylobacter jejuni subsp. doylei (strain ATCC BAA-1458 / RM4099 / 269.97)).